The sequence spans 387 residues: Zinc homeostasis factor 1 (387 aa).

The next 4 membrane-spanning stretches (helical) occupy residues 10–30 (IILLLGIDVTFFFIEIITGYA), 34–54 (LALIADSFHMLNDIVSLLVAL), 77–97 (EILGALSNGVFLIALCMFIFM), and 113–133 (TLMFFVGSLGLLSNFVGIFLF). Residues 195-214 (SYTGNHNGAGTSKPVNNHGS) are compositionally biased toward polar residues. The tract at residues 195-221 (SYTGNHNGAGTSKPVNNHGSIEQDAPK) is disordered. 2 helical membrane passes run 234–254 (FLHVLGDALGNIGVISAALFI) and 263–283 (FLFDPCISILLTFIILFSAIP).

The protein belongs to the cation diffusion facilitator (CDF) transporter (TC 2.A.4) family. SLC30A subfamily.

The protein resides in the endoplasmic reticulum membrane. Its subcellular location is the nucleus membrane. Its function is as follows. Involved in zinc homeostasis, where it plays a role in its accumulation in the endoplasmic reticulum/nucleus. Also has a role in the sequestration of cadmium into the endoplasmic reticulum. This Schizosaccharomyces pombe (strain 972 / ATCC 24843) (Fission yeast) protein is Zinc homeostasis factor 1 (zhf1).